A 194-amino-acid polypeptide reads, in one-letter code: Imidazoleglycerol-phosphate dehydratase (194 aa).

Belongs to the imidazoleglycerol-phosphate dehydratase family.

It is found in the cytoplasm. The catalysed reaction is D-erythro-1-(imidazol-4-yl)glycerol 3-phosphate = 3-(imidazol-4-yl)-2-oxopropyl phosphate + H2O. The protein operates within amino-acid biosynthesis; L-histidine biosynthesis; L-histidine from 5-phospho-alpha-D-ribose 1-diphosphate: step 6/9. This chain is Imidazoleglycerol-phosphate dehydratase, found in Listeria monocytogenes serotype 4a (strain HCC23).